Reading from the N-terminus, the 534-residue chain is Kelch repeat and BTB domain-containing protein 4 (534 aa).

Positions 1 to 25 (MKGGNADSWQREKLASMESPEEPGA) are disordered. Positions 61-128 (ADVTISVEGR…IYHGTVKLRA (68 aa)) constitute a BTB domain. Residues 163–255 (CLQVMWLADR…SLKEIGENVH (93 aa)) enclose the BACK domain. Kelch repeat units follow at residues 255-301 (HIYL…KHGG), 302-344 (DLYV…SVPG), 347-394 (AIYS…NLNG), 396-446 (IYLL…VHKD), and 448-497 (VFIV…VFRD).

In terms of assembly, component of the BCR(KBTBD4) E3 ubiquitin ligase complex, at least composed of CUL3, KBTBD4 and RBX1.

Its function is as follows. Substrate-specific adapter of a BCR (BTB-CUL3-RBX1) E3 ubiquitin ligase complex which targets CoREST corepressor complex components RCOR1, KDM1A/LSD1 and HDAC2 for proteasomal degradation. RCOR1 is likely to be the primary target while degradation of KDM1A and HDAC2 is likely due to their association with RCOR1. Also targets RCOR3, MIER2 and MIER3 for proteasomal degradation as well as associated proteins ZNF217 and RREB1. Degradation is dependent on the presence of an ELM2 domain in the target proteins. This Homo sapiens (Human) protein is Kelch repeat and BTB domain-containing protein 4 (KBTBD4).